The primary structure comprises 398 residues: DNA-directed RNA polymerase III subunit RPC4 (398 aa).

Residues 1–149 form a disordered region; it reads MSEGNAAGEP…IKKEKRETDE (149 aa). S2 is modified (N-acetylserine). S42 is subject to Phosphoserine. Composition is skewed to basic and acidic residues over residues 66–100, 116–128, and 140–149; these read KIKEEPKEEVTMKKEKRERDRDRQREGHGRGRGRP, MMKKKGNWDKTVD, and IKKEKRETDE. Residues K68 and K78 each participate in a glycyl lysine isopeptide (Lys-Gly) (interchain with G-Cter in SUMO2) cross-link. Omega-N-methylarginine is present on residues R95, R97, and R99. Residues K141, K152, K160, K190, K199, K206, K220, K285, K302, and K396 each participate in a glycyl lysine isopeptide (Lys-Gly) (interchain with G-Cter in SUMO2) cross-link. A disordered region spans residues 191–244; that stretch reads EESEEPEAKPFSAGPKEEDMEVDVPAVKVKEEPRDEEEEAKVKAPPRAARKTPG.

This sequence belongs to the eukaryotic RPC4/POLR3D RNA polymerase subunit family. As to quaternary structure, component of the RNA polymerase III complex consisting of 17 subunits: a ten-subunit horseshoe-shaped catalytic core composed of POLR3A/RPC1, POLR3B/RPC2, POLR1C/RPAC1, POLR1D/RPAC2, POLR3K/RPC10, POLR2E/RPABC1, POLR2F/RPABC2, POLR2H/RPABC3, POLR2K/RPABC4 and POLR2L/RPABC5; a mobile stalk composed of two subunits POLR3H/RPC8 and CRCP/RPC9, protruding from the core and functioning primarily in transcription initiation; and additional subunits homologous to general transcription factors of the RNA polymerase II machinery, POLR3C/RPC3-POLR3F/RPC6-POLR3G/RPC7 heterotrimer required for transcription initiation and POLR3D/RPC4-POLR3E/RPC5 heterodimer involved in both transcription initiation and termination. Sumoylation on Lys-141 can serve as a signal to mark misfolded Pol III for proteasomal degradation.

The protein localises to the nucleus. Its function is as follows. DNA-dependent RNA polymerase catalyzes the transcription of DNA into RNA using the four ribonucleoside triphosphates as substrates. Specific peripheric component of RNA polymerase III (Pol III) which synthesizes small non-coding RNAs including 5S rRNA, snRNAs, tRNAs and miRNAs from at least 500 distinct genomic loci. Enables recruitment of Pol III at transcription initiation site and drives transcription initiation from both type 2 and type 3 DNA promoters. Required for efficient transcription termination and reinitiation. Pol III plays a key role in sensing and limiting infection by intracellular bacteria and DNA viruses. Acts as nuclear and cytosolic DNA sensor involved in innate immune response. Can sense non-self dsDNA that serves as template for transcription into dsRNA. The non-self RNA polymerase III transcripts, such as Epstein-Barr virus-encoded RNAs (EBERs) induce type I interferon and NF-kappa-B through the RIG-I pathway. This Mus musculus (Mouse) protein is DNA-directed RNA polymerase III subunit RPC4.